We begin with the raw amino-acid sequence, 315 residues long: Protein OPG185 (315 aa).

An N-terminal signal peptide occupies residues 1–16 (MTRLPILLLLISLVYA). An Ig-like V-type domain is found at 17–121 (TPFPQTSKKI…NDTDKVDYEE (105 aa)). Topologically, residues 17-279 (TPFPQTSKKI…SNYKTKDFVE (263 aa)) are virion surface. A disulfide bridge links Cys-34 with Cys-103. N-linked (GlcNAc...) asparagine; by host glycans are attached at residues Asn-37, Asn-69, Asn-112, and Asn-161. The span at 193–202 (NTVSASSGES) shows a compositional bias: polar residues. The segment at 193–213 (NTVSASSGESTTDETPEPITD) is disordered. Asn-254 carries N-linked (GlcNAc...) asparagine; by host glycosylation. A helical membrane pass occupies residues 280–303 (IFGITALIILSAVAIFCITYYIYN). The Intravirion portion of the chain corresponds to 304 to 315 (KRSRKYKTENKV).

The protein belongs to the orthopoxvirus OPG185 family. Heterodimerizes with OPG040. The heterodimer OPG185-OPG040 interacts with components of the entry fusion complex OPG143 and OPG094. Heterodimer with C3/VPC protein; disulfide-linked. Post-translationally, glycosylated; contains phosphate and sulfate-substituted glycans. O-glycosylation is required for hemagglutination and hemadsorption activities of infected cell membranes.

Its subcellular location is the virion membrane. It localises to the host membrane. In terms of biological role, prevents cell to cell fusion by interacting with and directing the viral OPG040 protein on the host plasma membrane. The OPG185-OPG040 complex associates with components of the entry fusion complex (EFC) presumably to avoid superinfection and syncytium formation. Via its interaction with C3/VCP protein, protects the infected cell and probably also the extracellular enveloped virus from complement attack. This Homo sapiens (Human) protein is Protein OPG185 (OPG185).